Here is an 840-residue protein sequence, read N- to C-terminus: Protein argonaute-2 (840 aa).

The PAZ domain occupies 210–329 (PVIEFVCEVL…LPLEVCNIVA (120 aa)). At serine 368 the chain carries Phosphoserine. The 302-residue stretch at 498–799 (LVVVILPGKT…VAFRARYHLV (302 aa)) folds into the Piwi domain. 2 residues coordinate a divalent metal cation: aspartate 578 and aspartate 650. Proline 681 carries the post-translational modification 4-hydroxyproline. Position 788 (histidine 788) interacts with a divalent metal cation. Phosphoserine is present on residues serine 805, serine 809, serine 812, and serine 815.

Belongs to the argonaute family. Ago subfamily. As to quaternary structure, interacts with DICER1 through its Piwi domain and with TARBP2 during assembly of the RNA-induced silencing complex (RISC). Together, DICER1, AGO2 and TARBP2 constitute the trimeric RISC loading complex (RLC), or micro-RNA (miRNA) loading complex (miRLC). Within the RLC/miRLC, DICER1 and TARBP2 are required to process precursor miRNAs (pre-miRNAs) to mature miRNAs and then load them onto AGO2. AGO2 bound to the mature miRNA constitutes the minimal RISC and may subsequently dissociate from DICER1 and TARBP2. Note however that the term RISC has also been used to describe the trimeric RLC/miRLC. The formation of RISC complexes containing siRNAs rather than miRNAs appears to occur independently of DICER1. Interacts with AGO1. Also interacts with DDB1, DDX5, DDX6, DDX20, DHX30, DHX36, DDX47, DHX9, ELAVL, FXR1, GEMIN4, HNRNPF, IGF2BP1, ILF3, IMP8, MATR3, PABPC1, PRMT5, P4HA1, P4HB, RBM4, SART3, TNRC6A, TNRC6B, UPF1 and YBX1. Interacts with the P-body components DCP1A and XRN1. Associates with polysomes and messenger ribonucleoproteins (mNRPs). Interacts with RBM4; the interaction is modulated under stress-induced conditions, occurs under both cell proliferation and differentiation conditions and in an RNA- and phosphorylation-independent manner. Interacts with LIMD1, WTIP and AJUBA. Interacts with TRIM71; the interaction increases in presence of RNA. Interacts with APOBEC3G in an RNA-dependent manner. Interacts with APOBEC3A, APOBEC3C, APOBEC3F and APOBEC3H. Interacts with DICER1, TARBP2, EIF6, MOV10 and RPL7A (60S ribosome subunit); they form a large RNA-induced silencing complex (RISC). Interacts with FMR1. Interacts with ZFP36. Interacts with RC3H1; the interaction is RNA independent. Found in a complex composed of AGO2, CHD7 and ARB2A. Interacts with SND1 and SYT11. Interacts with CLNK. Interacts with GARRE1. Post-translationally, hydroxylated. 4-hydroxylation appears to enhance protein stability but is not required for miRNA-binding or endonuclease activity. In terms of processing, ubiquitinated on surface-exposed lysines by a SCF-like E3 ubiquitin-protein ligase complex containing ZSWIM8 during target-directed microRNA degradation (TDMD), a process that mediates degradation of microRNAs (miRNAs). Ubiquitination by the SCF-like E3 ubiquitin-protein ligase complex containing ZSWIM8 leads to its subsequent degradation, thereby exposing miRNAs for degradation. ZSWIM8 recognizes and binds AGO2 when it is engaged with a TDMD target. Phosphorylation at Ser-368 by AKT3; leads to up-regulate translational repression of microRNA target and down-regulate endonucleolytic cleavage. Post-translationally, a phosphorylation cycle of C-terminal serine cluster (Ser-805-Ser-815) regulates the release of target mRNAs. Target-binding leads to phosphorylation of these residues by CSNK1A1, which reduces the affinity of AGO2 for mRNA and enables target release. The ANKRD52-PPP6C phosphatase complex dephosphorylates the residues, which primes AGO2 for binding a new target.

It is found in the cytoplasm. The protein localises to the P-body. Its subcellular location is the nucleus. The catalysed reaction is Endonucleolytic cleavage to 5'-phosphomonoester.. In terms of biological role, required for RNA-mediated gene silencing (RNAi) by the RNA-induced silencing complex (RISC). The 'minimal RISC' appears to include AGO2 bound to a short guide RNA such as a microRNA (miRNA) or short interfering RNA (siRNA). These guide RNAs direct RISC to complementary mRNAs that are targets for RISC-mediated gene silencing. The precise mechanism of gene silencing depends on the degree of complementarity between the miRNA or siRNA and its target. Binding of RISC to a perfectly complementary mRNA generally results in silencing due to endonucleolytic cleavage of the mRNA specifically by AGO2. Binding of RISC to a partially complementary mRNA results in silencing through inhibition of translation, and this is independent of endonuclease activity. May inhibit translation initiation by binding to the 7-methylguanosine cap, thereby preventing the recruitment of the translation initiation factor eIF4-E. May also inhibit translation initiation via interaction with EIF6, which itself binds to the 60S ribosomal subunit and prevents its association with the 40S ribosomal subunit. The inhibition of translational initiation leads to the accumulation of the affected mRNA in cytoplasmic processing bodies (P-bodies), where mRNA degradation may subsequently occur. In some cases RISC-mediated translational repression is also observed for miRNAs that perfectly match the 3' untranslated region (3'-UTR). Can also up-regulate the translation of specific mRNAs under certain growth conditions. Binds to the AU element of the 3'-UTR of the TNF (TNF-alpha) mRNA and up-regulates translation under conditions of serum starvation. Also required for transcriptional gene silencing (TGS), in which short RNAs known as antigene RNAs or agRNAs direct the transcriptional repression of complementary promoter regions. This chain is Protein argonaute-2 (AGO2), found in Oryctolagus cuniculus (Rabbit).